We begin with the raw amino-acid sequence, 308 residues long: Aliphatic nitrilase (308 aa).

The 267-residue stretch at 4–270 (FRAAVVQAAP…ETILTADLDT (267 aa)) folds into the CN hydrolase domain. Glutamate 44 (proton acceptor) is an active-site residue. Lysine 130 is a catalytic residue. Residue cysteine 164 is the Nucleophile of the active site.

The protein belongs to the carbon-nitrogen hydrolase superfamily. Nitrilase family.

It catalyses the reaction a nitrile + 2 H2O = a carboxylate + NH4(+). Functionally, nitrilase that hydrolyzes preferentially phenylacetonitrile, but not (R,S)-mandelonitrile. Also acts on dinitriles like phenylenediacetonitriles (PDAs) 1,2-PDA, 1,3-PDA, and 1,4-PDA, and cyanophenyl acetonitriles (CPAs) 2-CPA and 4-CPA, but with lower activities. The sequence is that of Aliphatic nitrilase (nit) from Sinorhizobium fredii (strain HH103).